The following is a 328-amino-acid chain: GMP reductase (328 aa).

Cysteine 176 (thioimidate intermediate) is an active-site residue. An NADP(+)-binding site is contributed by 205-228; sequence IIADGGIRTHGDIAKSIRFGASMI.

It belongs to the IMPDH/GMPR family. GuaC type 2 subfamily.

The enzyme catalyses IMP + NH4(+) + NADP(+) = GMP + NADPH + 2 H(+). Catalyzes the irreversible NADPH-dependent deamination of GMP to IMP. It functions in the conversion of nucleobase, nucleoside and nucleotide derivatives of G to A nucleotides, and in maintaining the intracellular balance of A and G nucleotides. The sequence is that of GMP reductase from Streptococcus pneumoniae serotype 4 (strain ATCC BAA-334 / TIGR4).